A 207-amino-acid polypeptide reads, in one-letter code: Nuclear transcription factor Y subunit beta (207 aa).

The interval 1-52 is a domain; sequence MTMDGDSSTTDASQLGISADYIGGSHYVIQPHDDTEDSMNDHEDTNGSKESF. Residues 27–52 form a disordered region; that stretch reads YVIQPHDDTEDSMNDHEDTNGSKESF. Residues 39 to 52 are compositionally biased toward basic and acidic residues; the sequence is MNDHEDTNGSKESF. Positions 53–142 are b domain; the sequence is REQDIYLPIA…PLKLYLQKFR (90 aa). A DNA-binding region spans residues 59-65; it reads LPIANVA. The subunit association domain (SAD) stretch occupies residues 86-97; sequence VQECVSEFISFI. Lysine 140 participates in a covalent cross-link: Glycyl lysine isopeptide (Lys-Gly) (interchain with G-Cter in ubiquitin). The c domain stretch occupies residues 143–207; it reads EAMKGEKGIG…ISGVQQIQFS (65 aa).

The protein belongs to the NFYB/HAP3 subunit family. Heterotrimeric transcription factor composed of three components, NF-YA, NF-YB and NF-YC. NF-YB and NF-YC must interact and dimerize for NF-YA association and DNA binding. Interacts with C1QBP. Monoubiquitination at Lys-140 plays an important role in transcriptional activation by allowing the deposition of histone H3 methylations as well as histone H2B monoubiquitination at 'Lys-121'.

The protein localises to the nucleus. In terms of biological role, component of the sequence-specific heterotrimeric transcription factor (NF-Y) which specifically recognizes a 5'-CCAAT-3' box motif found in the promoters of its target genes. NF-Y can function as both an activator and a repressor, depending on its interacting cofactors. This Equus caballus (Horse) protein is Nuclear transcription factor Y subunit beta (NFYB).